The chain runs to 28 residues: 3-phytase B (28 aa).

The interval 1–28 (RDPTGCEVDQVIMVKRHGERYPSPSAGK) is disordered. His17 functions as the Nucleophile in the catalytic mechanism.

This sequence belongs to the histidine acid phosphatase family.

It catalyses the reaction 1D-myo-inositol hexakisphosphate + H2O = 1D-myo-inositol 1,2,4,5,6-pentakisphosphate + phosphate. Functionally, catalyzes the hydrolysis of inorganic orthophosphate from phytate. The chain is 3-phytase B (phyB) from Aspergillus ficuum.